Consider the following 185-residue polypeptide: Ribosome-recycling factor (185 aa).

Basic and acidic residues predominate over residues 138-179 (TLKRQEKNGDITEDEQRSLEKQVQKVTDDATKEIDKLADQKS). Residues 138–185 (TLKRQEKNGDITEDEQRSLEKQVQKVTDDATKEIDKLADQKSQEITQG) are disordered.

This sequence belongs to the RRF family.

The protein localises to the cytoplasm. Functionally, responsible for the release of ribosomes from messenger RNA at the termination of protein biosynthesis. May increase the efficiency of translation by recycling ribosomes from one round of translation to another. In Lactobacillus gasseri (strain ATCC 33323 / DSM 20243 / BCRC 14619 / CIP 102991 / JCM 1131 / KCTC 3163 / NCIMB 11718 / NCTC 13722 / AM63), this protein is Ribosome-recycling factor.